A 197-amino-acid polypeptide reads, in one-letter code: UPF0228 protein MA_3125 (197 aa).

The protein belongs to the UPF0228 family.

This chain is UPF0228 protein MA_3125, found in Methanosarcina acetivorans (strain ATCC 35395 / DSM 2834 / JCM 12185 / C2A).